Here is a 147-residue protein sequence, read N- to C-terminus: MVDHARAARLAKRIQTIVATAIEREVKDRRLEYVTVTDTRVTGDLHDATVYYTVRGRTIDDQPDLKAAAEALQRARGQLRKIVGDQLSVRFTPTLSFELDTVPETSAHMEDLLARARARDLELAELKKNAQPAGDAHPYKDDDAMND.

The interval 126–147 (LKKNAQPAGDAHPYKDDDAMND) is disordered. Basic and acidic residues predominate over residues 137-147 (HPYKDDDAMND).

Belongs to the RbfA family. In terms of assembly, monomer. Binds 30S ribosomal subunits, but not 50S ribosomal subunits or 70S ribosomes.

It localises to the cytoplasm. One of several proteins that assist in the late maturation steps of the functional core of the 30S ribosomal subunit. Associates with free 30S ribosomal subunits (but not with 30S subunits that are part of 70S ribosomes or polysomes). Required for efficient processing of 16S rRNA. May interact with the 5'-terminal helix region of 16S rRNA. The polypeptide is Ribosome-binding factor A (Corynebacterium diphtheriae (strain ATCC 700971 / NCTC 13129 / Biotype gravis)).